The sequence spans 406 residues: Kelch domain-containing protein 2 (406 aa).

Kelch repeat units lie at residues 31 to 85, 92 to 136, 148 to 207, 221 to 259, 271 to 311, and 322 to 359; these read ERSG…NTEG, SGSC…ERID, LGVW…TWSQ, HACA…NELI, HSLT…IQFN, and HTAC…IFSV.

As to quaternary structure, component of a CRL2(KLHDC2) E3 ubiquitin-protein ligase complex, also named ECS(KLHDC2) complex, composed of CUL2, Elongin BC (ELOB and ELOC), RBX1 and substrate-specific adapter KLHDC2. May form oligomers as a KLHDC2-ELOB-ELOC complex; this interaction is autoinhibitory for the E3 ligase complex as the substrate-binding site of KLHDC2 is blocked in the oligomer. Interacts with CREB3; interaction is direct and specific as it does not interact with CREB1, ATF4, ATF6, JUN, FOS, CEBPA or herpes simplex virus transactivator VP16. Autoubiquitinated by the CRL2(KLHDC2) E3 ligase complex. In terms of tissue distribution, widely expressed, with high levels in skeletal muscle, heart, pancreas and liver. Undetectable in peripheral blood leukocytes.

It is found in the nucleus. Its pathway is protein modification; protein ubiquitination. Functionally, substrate-recognition component of a Cul2-RING (CRL2) E3 ubiquitin-protein ligase complex of the DesCEND (destruction via C-end degrons) pathway, which recognizes a C-degron located at the extreme C terminus of target proteins, leading to their ubiquitination and degradation. The C-degron recognized by the DesCEND pathway is usually a motif of less than ten residues and can be present in full-length proteins, truncated proteins or proteolytically cleaved forms. The CRL2(KLHDC2) complex specifically recognizes proteins with a diglycine (Gly-Gly) at the C-terminus, leading to their ubiquitination and degradation. The CRL2(KLHDC2) complex mediates ubiquitination and degradation of truncated SELENOK and SELENOS selenoproteins produced by failed UGA/Sec decoding, which end with a diglycine. The CRL2(KLHDC2) complex also recognizes proteolytically cleaved proteins ending with Gly-Gly, such as the N-terminal fragment of USP1, leading to their degradation. May also act as an indirect repressor of CREB3-mediated transcription by interfering with CREB3-DNA-binding. This Homo sapiens (Human) protein is Kelch domain-containing protein 2.